We begin with the raw amino-acid sequence, 420 residues long: Anaerobic glycerol-3-phosphate dehydrogenase subunit B (420 aa).

It belongs to the anaerobic G-3-P dehydrogenase subunit B family. Composed of a catalytic GlpA/B dimer and of membrane bound GlpC. It depends on FMN as a cofactor.

The enzyme catalyses a quinone + sn-glycerol 3-phosphate = dihydroxyacetone phosphate + a quinol. Its pathway is polyol metabolism; glycerol degradation via glycerol kinase pathway; glycerone phosphate from sn-glycerol 3-phosphate (anaerobic route): step 1/1. Functionally, conversion of glycerol 3-phosphate to dihydroxyacetone. Uses fumarate or nitrate as electron acceptor. This Pectobacterium carotovorum subsp. carotovorum (strain PC1) protein is Anaerobic glycerol-3-phosphate dehydrogenase subunit B.